Reading from the N-terminus, the 80-residue chain is Omega-conotoxin-like PuIA (80 aa).

A signal peptide spans 1-22 (MKLTCVMIVAVLFLTAWTFVTA). Positions 23-50 (DSIRALEDLFAKAPDEMENSGASPLNER) are excised as a propeptide. 3 disulfide bridges follow: C52-C70, C59-C74, and C69-C78.

It belongs to the conotoxin O1 superfamily. As to expression, expressed by the venom duct.

The protein resides in the secreted. Functionally, omega-conotoxins act at presynaptic membranes, they bind and block voltage-gated calcium channels (Cav). This is Omega-conotoxin-like PuIA from Conus pulicarius (Flea-bitten cone).